Here is a 63-residue protein sequence, read N- to C-terminus: YLDVNQIASYLLCLGEGAVFNGRKTCQIGCRAACQQPGCGGYKECEQIPNIRLHKYRCHCISG.

In terms of assembly, monomer. Post-translationally, contains four disulfide bonds.

The protein localises to the secreted. In terms of biological role, has antimicrobial activity against Gram-positive bacteria and fungi. This Megoura viciae (Vetch aphid) protein is Megourin-3.